A 415-amino-acid polypeptide reads, in one-letter code: MSHIRHLAQQCRDAARRLATLSTDAKRRLLETMATALNTDAATILAANAADLDAARTQQVGTAMLDRLALDPQRLAAMADALRDIAALPDPVGQVTRDDQRPNGIHVQKIRVPLGVIAMIYEARPNVTADAAALCIKAGNGIILRGGSEAIRSNIAIATALQRALRLASLPETALILVQDMARHTMLELLQLSDLIDLVIPRGGEGLIRFVAEHARIPVIKHYKGVCHQFVDASADIEMAIRLLIDGKTTRPAACNALETLLVHTDIAPRFLPAAAAALRPYGVQLRGDHATCTLLPDVVLATDADYAAEYLDLILAIRIVPNVDAALEHIRRYGSDHTEVIVTADPAHADTFVQQLYSAVVMVNASSRFSDGGALGLGAEIGISTTRLHAYGPMGLDALTVERFVVRGQGQVRH.

This sequence belongs to the gamma-glutamyl phosphate reductase family.

Its subcellular location is the cytoplasm. It catalyses the reaction L-glutamate 5-semialdehyde + phosphate + NADP(+) = L-glutamyl 5-phosphate + NADPH + H(+). Its pathway is amino-acid biosynthesis; L-proline biosynthesis; L-glutamate 5-semialdehyde from L-glutamate: step 2/2. Functionally, catalyzes the NADPH-dependent reduction of L-glutamate 5-phosphate into L-glutamate 5-semialdehyde and phosphate. The product spontaneously undergoes cyclization to form 1-pyrroline-5-carboxylate. This chain is Gamma-glutamyl phosphate reductase, found in Xylella fastidiosa (strain 9a5c).